The primary structure comprises 398 residues: Inner membrane protein YjgN (398 aa).

The Cytoplasmic segment spans residues 1 to 24 (MAQVINEMDVPSHSFVFHGTGERY). A helical membrane pass occupies residues 25–45 (FLICVVNVLLTIITLGIYLPW). The Periplasmic portion of the chain corresponds to 46 to 73 (ALMKCKRYLYANMEVNGQRFSYGITGGN). The helical transmembrane segment at 74–94 (VFVSCLFFVFFYFAILMTVSA) threads the bilayer. Position 95 (aspartate 95) is a topological domain, cytoplasmic. The helical transmembrane segment at 96 to 116 (MPLVGCVLTLLLLVLLIFMAA) threads the bilayer. The Periplasmic segment spans residues 117–142 (KGLRHQALMTSLNGVRFSFNCSMKGF). The helical transmembrane segment at 143–163 (WWVTFFLPILMAIGMGTVFFI) threads the bilayer. At 164-175 (STKMLPANSSSS) the chain is on the cytoplasmic side. The helical transmembrane segment at 176 to 196 (VIISMVLMAIVGIVSIGIFNG) threads the bilayer. Topologically, residues 197–228 (TLYSLVMSFLWSNTSFGIHRFKVKLDTTYCIK) are periplasmic. Residues 229–249 (YAILAFLALLPFLAVAGYIIF) traverse the membrane as a helical segment. At 250–278 (DQILNAYDSSVYANDDIENLQQFMEMQRK) the chain is on the cytoplasmic side. The chain crosses the membrane as a helical span at residues 279 to 299 (MIIAQLIYYFGIAVSTSYLTV). Over 300–333 (SLRNHFMSNLSLNDGRIRFRLTLTYHGMLYRMCA) the chain is Periplasmic. A helical transmembrane segment spans residues 334 to 354 (LVVISGITGGLAYPLLKIWMI). The Cytoplasmic segment spans residues 355–398 (DWQAKNTYLLGDLDDLPLINKEEQPDKGFLASISRGVMPSLPFL).

The protein localises to the cell inner membrane. The protein is Inner membrane protein YjgN (yjgN) of Escherichia coli (strain K12).